The following is a 237-amino-acid chain: Proteasome subunit alpha type-5-A (237 aa).

Methionine 1 is subject to N-acetylmethionine. Residues lysine 43 and lysine 66 each participate in a glycyl lysine isopeptide (Lys-Gly) (interchain with G-Cter in ubiquitin) cross-link.

Belongs to the peptidase T1A family. Component of the 20S core complex of the 26S proteasome. The 26S proteasome is composed of a core protease (CP), known as the 20S proteasome, capped at one or both ends by the 19S regulatory particle (RP/PA700). The 20S proteasome core is composed of 28 subunits that are arranged in four stacked rings, resulting in a barrel-shaped structure. The two end rings are each formed by seven alpha subunits, and the two central rings are each formed by seven beta subunits. The catalytic chamber with the active sites is on the inside of the barrel.

It is found in the cytoplasm. Its subcellular location is the nucleus. Functionally, the proteasome is a multicatalytic proteinase complex which is characterized by its ability to cleave peptides with Arg, Phe, Tyr, Leu, and Glu adjacent to the leaving group at neutral or slightly basic pH. The proteasome has an ATP-dependent proteolytic activity. The chain is Proteasome subunit alpha type-5-A (PAE1) from Arabidopsis thaliana (Mouse-ear cress).